The following is a 216-amino-acid chain: Somatotropin (216 aa).

A signal peptide spans 1–26 (MAAGPRTSMLLAFALLCLPWTQEVGA). Position 45 (H45) interacts with Zn(2+). C78 and C189 form a disulfide bridge. S131 is modified (phosphoserine). E198 provides a ligand contact to Zn(2+). C206 and C214 are oxidised to a cystine.

This sequence belongs to the somatotropin/prolactin family.

The protein resides in the secreted. Functionally, plays an important role in growth control. Its major role in stimulating body growth is to stimulate the liver and other tissues to secrete IGF1. It stimulates both the differentiation and proliferation of myoblasts. It also stimulates amino acid uptake and protein synthesis in muscle and other tissues. The chain is Somatotropin (GH1) from Delphinus delphis (Short-beaked common dolphin).